A 242-amino-acid chain; its full sequence is 2-C-methyl-D-erythritol 4-phosphate cytidylyltransferase (242 aa).

It belongs to the IspD/TarI cytidylyltransferase family. IspD subfamily.

It catalyses the reaction 2-C-methyl-D-erythritol 4-phosphate + CTP + H(+) = 4-CDP-2-C-methyl-D-erythritol + diphosphate. It functions in the pathway isoprenoid biosynthesis; isopentenyl diphosphate biosynthesis via DXP pathway; isopentenyl diphosphate from 1-deoxy-D-xylulose 5-phosphate: step 2/6. Its function is as follows. Catalyzes the formation of 4-diphosphocytidyl-2-C-methyl-D-erythritol from CTP and 2-C-methyl-D-erythritol 4-phosphate (MEP). In Shewanella loihica (strain ATCC BAA-1088 / PV-4), this protein is 2-C-methyl-D-erythritol 4-phosphate cytidylyltransferase.